The sequence spans 224 residues: Flagellar L-ring protein (224 aa).

An N-terminal signal peptide occupies residues 1 to 15 (MARYLLLASTLLLAA). The N-palmitoyl cysteine moiety is linked to residue cysteine 16. Residue cysteine 16 is the site of S-diacylglycerol cysteine attachment.

Belongs to the FlgH family. The basal body constitutes a major portion of the flagellar organelle and consists of four rings (L,P,S, and M) mounted on a central rod.

It localises to the cell outer membrane. The protein resides in the bacterial flagellum basal body. Functionally, assembles around the rod to form the L-ring and probably protects the motor/basal body from shearing forces during rotation. This chain is Flagellar L-ring protein, found in Shewanella sp. (strain ANA-3).